Consider the following 654-residue polypeptide: MASLASSQTEPNTSESPVPASMFSPEPDGEDSDCSLDGEPLRNGEADIDVTSKFVLVSPSAEQYDSLLHQLRDRMDEGRGETIYVIGQGSDGTEYGLNEADMEASVATVTSMAEQIVADMILLREHQEAGGKVQDYLVRKSVGDNDFLEVRVAVVGNVDAGKSTLLGVLTHGELDNGRGFARQKLFRHKHEIESGRTSSVGNDILGFDNHGQVVNKPDNHGGSLEWTKICEKSSKIITFIDLAGHEKYLKTTVFGMTGHLPDFCMLMVGSNAGIVGMTKEHLGLALALNVPVFVVVTKIDMCPANILQETLKLLQRLLKSPGCRKIPVLVQNKDDVIVTASNFSSERMCPIFQISNVTGENLDLLKMFLNLLSPRSSSREEEPAEFQIDDTYSVPGVGTVVSGTTLRGLIKLNDLLLLGPDPLGNFTSIAVKSIHRKRMPVKEVRGGQTASFALKKIKRSTIRKGMVMVSPRLNPQASWEFEAEILVLHHPTTISPRYQAMVHCGSIRQTATILTMSRDCLRTGDKAIVHFRFIKTPEYLHIDQRLVFREGRTKAVGTITKLLQSTNNLPMNSKPPQQVKMQSTKKSLHGKKDEQSPAAAVTEEASPSAAAIGVTAGAGAMQAQPKTGGGGRRRGGQRHKVKAQGACTASTGGC.

The span at 1–16 shows a compositional bias: polar residues; it reads MASLASSQTEPNTSES. A disordered region spans residues 1 to 44; that stretch reads MASLASSQTEPNTSESPVPASMFSPEPDGEDSDCSLDGEPLRNG. Residues 27-36 show a composition bias toward acidic residues; that stretch reads PDGEDSDCSL. Residues 147-377 form the tr-type G domain; that stretch reads FLEVRVAVVG…FLNLLSPRSS (231 aa). The tract at residues 156–163 is G1; sequence GNVDAGKS. Residue 156–163 participates in GTP binding; sequence GNVDAGKS. Residues 195 to 199 form a G2 region; sequence GRTSS. Positions 241–244 are G3; the sequence is DLAG. Residues 241 to 245 and 297 to 300 each bind GTP; these read DLAGH and TKID. Positions 297–300 are G4; the sequence is TKID. Residues 355 to 357 are G5; the sequence is SNV. The segment covering 566 to 585 has biased composition (polar residues); that stretch reads TNNLPMNSKPPQQVKMQSTK. Residues 566–654 are disordered; the sequence is TNNLPMNSKP…GACTASTGGC (89 aa). Residues 609-620 show a composition bias toward low complexity; the sequence is AAAIGVTAGAGA. Residues 631–642 show a composition bias toward basic residues; that stretch reads GRRRGGQRHKVK.

The protein belongs to the TRAFAC class translation factor GTPase superfamily. Classic translation factor GTPase family. GTPBP1 subfamily.

The protein resides in the cytoplasm. Functionally, promotes degradation of target mRNA species. Plays a role in the regulation of circadian mRNA stability. Binds GTP and has GTPase activity. The polypeptide is GTP-binding protein 1 (gtpbp1) (Xenopus laevis (African clawed frog)).